The sequence spans 353 residues: Thiamine-phosphate synthase (353 aa).

The unknown stretch occupies residues 1 to 128 (MKSMPFAPIA…AASAAAIRYG (128 aa)). Residues 129–353 (LYDLEVTVLQ…TSLQLLEALR (225 aa)) form a thiamine-phosphate synthase region. Residues 185–189 (QYRNK) and Asn-217 each bind 4-amino-2-methyl-5-(diphosphooxymethyl)pyrimidine. Positions 218 and 237 each coordinate Mg(2+). Residue Ser-256 coordinates 4-amino-2-methyl-5-(diphosphooxymethyl)pyrimidine. 282–284 (TAT) contacts 2-[(2R,5Z)-2-carboxy-4-methylthiazol-5(2H)-ylidene]ethyl phosphate. Lys-285 contributes to the 4-amino-2-methyl-5-(diphosphooxymethyl)pyrimidine binding site. Gly-312 is a binding site for 2-[(2R,5Z)-2-carboxy-4-methylthiazol-5(2H)-ylidene]ethyl phosphate.

This sequence belongs to the thiamine-phosphate synthase family. Requires Mg(2+) as cofactor.

It catalyses the reaction 2-[(2R,5Z)-2-carboxy-4-methylthiazol-5(2H)-ylidene]ethyl phosphate + 4-amino-2-methyl-5-(diphosphooxymethyl)pyrimidine + 2 H(+) = thiamine phosphate + CO2 + diphosphate. The catalysed reaction is 2-(2-carboxy-4-methylthiazol-5-yl)ethyl phosphate + 4-amino-2-methyl-5-(diphosphooxymethyl)pyrimidine + 2 H(+) = thiamine phosphate + CO2 + diphosphate. The enzyme catalyses 4-methyl-5-(2-phosphooxyethyl)-thiazole + 4-amino-2-methyl-5-(diphosphooxymethyl)pyrimidine + H(+) = thiamine phosphate + diphosphate. It participates in cofactor biosynthesis; thiamine diphosphate biosynthesis; thiamine phosphate from 4-amino-2-methyl-5-diphosphomethylpyrimidine and 4-methyl-5-(2-phosphoethyl)-thiazole: step 1/1. Its function is as follows. Condenses 4-methyl-5-(beta-hydroxyethyl)thiazole monophosphate (THZ-P) and 2-methyl-4-amino-5-hydroxymethyl pyrimidine pyrophosphate (HMP-PP) to form thiamine monophosphate (TMP). The sequence is that of Thiamine-phosphate synthase from Prochlorococcus marinus (strain MIT 9313).